We begin with the raw amino-acid sequence, 408 residues long: Histidine--tRNA ligase (408 aa).

Belongs to the class-II aminoacyl-tRNA synthetase family. As to quaternary structure, homodimer.

It is found in the cytoplasm. The catalysed reaction is tRNA(His) + L-histidine + ATP = L-histidyl-tRNA(His) + AMP + diphosphate + H(+). In Campylobacter jejuni subsp. doylei (strain ATCC BAA-1458 / RM4099 / 269.97), this protein is Histidine--tRNA ligase.